The chain runs to 85 residues: Cell division topological specificity factor (85 aa).

It belongs to the MinE family.

Its function is as follows. Prevents the cell division inhibition by proteins MinC and MinD at internal division sites while permitting inhibition at polar sites. This ensures cell division at the proper site by restricting the formation of a division septum at the midpoint of the long axis of the cell. This chain is Cell division topological specificity factor, found in Xylella fastidiosa (strain M12).